The following is a 105-amino-acid chain: Large ribosomal subunit protein P2 (105 aa).

The disordered stretch occupies residues 84–105; it reads AEAKKEEPEEEADDDMGFGLFD.

Belongs to the eukaryotic ribosomal protein P1/P2 family. In terms of assembly, P1 and P2 exist as dimers at the large ribosomal subunit. Post-translationally, phosphorylated.

Its function is as follows. Plays an important role in the elongation step of protein synthesis. The sequence is that of Large ribosomal subunit protein P2 (ARP-1) from Leishmania donovani.